Consider the following 213-residue polypeptide: LexA repressor 2 (213 aa).

The segment at residues 27-47 (QTEIARAFGFKGVRAAQYHLE) is a DNA-binding region (H-T-H motif). Catalysis depends on for autocatalytic cleavage activity residues serine 133 and lysine 170.

This sequence belongs to the peptidase S24 family. As to quaternary structure, homodimer.

It catalyses the reaction Hydrolysis of Ala-|-Gly bond in repressor LexA.. Its function is as follows. Represses a number of genes involved in the response to DNA damage (SOS response), including recA and lexA. In the presence of single-stranded DNA, RecA interacts with LexA causing an autocatalytic cleavage which disrupts the DNA-binding part of LexA, leading to derepression of the SOS regulon and eventually DNA repair. The chain is LexA repressor 2 from Xanthomonas campestris pv. campestris (strain ATCC 33913 / DSM 3586 / NCPPB 528 / LMG 568 / P 25).